The primary structure comprises 91 residues: MKPNIHPDNYRTVLFFDSSANEGWLIRSCAETHGKTMVWTDGKEYPLFSLDTSSASHPVYTGKQRNVNTEGRASKFNQRFQSVMSSFRKDK.

Belongs to the bacterial ribosomal protein bL31 family. Type B subfamily. As to quaternary structure, part of the 50S ribosomal subunit.

The protein is Large ribosomal subunit protein bL31B of Neisseria meningitidis serogroup B (strain ATCC BAA-335 / MC58).